Here is a 147-residue protein sequence, read N- to C-terminus: Hemoglobin subunit deltaH (147 aa).

The region spanning 3 to 147 (RLTDSEKAEV…MANALAHKYH (145 aa)) is the Globin domain. Residues H64 and H93 each coordinate heme b.

It belongs to the globin family. In terms of assembly, heterotetramer of two delta chains and two alpha chains. Red blood cells.

In Procavia capensis (Rock hyrax), this protein is Hemoglobin subunit deltaH.